Consider the following 318-residue polypeptide: Phosphate acetyltransferase (318 aa).

This sequence belongs to the phosphate acetyltransferase and butyryltransferase family.

The protein resides in the cytoplasm. The catalysed reaction is acetyl-CoA + phosphate = acetyl phosphate + CoA. It participates in metabolic intermediate biosynthesis; acetyl-CoA biosynthesis; acetyl-CoA from acetate: step 2/2. In Paracoccus denitrificans, this protein is Phosphate acetyltransferase (pta).